We begin with the raw amino-acid sequence, 655 residues long: Alpha-amylase (655 aa).

Catalysis depends on E123, which acts as the Nucleophile. D214 acts as the Proton donor in catalysis.

It belongs to the glycosyl hydrolase 57 family.

It catalyses the reaction Endohydrolysis of (1-&gt;4)-alpha-D-glucosidic linkages in polysaccharides containing three or more (1-&gt;4)-alpha-linked D-glucose units.. The polypeptide is Alpha-amylase (amyA) (Pyrococcus abyssi (strain GE5 / Orsay)).